The primary structure comprises 471 residues: Monocarboxylate transporter 4 (471 aa).

Residues M1–D17 are Cytoplasmic-facing. Residues G18 to F38 form a helical membrane-spanning segment. Residues P39–A61 are Extracellular-facing. A helical membrane pass occupies residues W62–V82. Over N83–R84 the chain is Cytoplasmic. The chain crosses the membrane as a helical span at residues F85–A105. The Extracellular portion of the chain corresponds to S106–R109. The chain crosses the membrane as a helical span at residues S110 to F130. Residues Q131 to N149 lie on the Cytoplasmic side of the membrane. Residues G150–L170 form a helical membrane-spanning segment. Over Q171–G179 the chain is Extracellular. Residues F180–L200 traverse the membrane as a helical segment. The Cytoplasmic segment spans residues V201–G231. A helical membrane pass occupies residues F232–F252. Over V253–A267 the chain is Extracellular. Residues A268–I288 form a helical membrane-spanning segment. The Cytoplasmic portion of the chain corresponds to T289–S298. Residues V299–A319 traverse the membrane as a helical segment. Over S320 to D321 the chain is Extracellular. Residues Y322–L342 traverse the membrane as a helical segment. The Cytoplasmic segment spans residues Q343–K355. The chain crosses the membrane as a helical span at residues F356–P376. Over S377 to V391 the chain is Extracellular. The chain crosses the membrane as a helical span at residues F392 to F412. At C413–V471 the chain is on the cytoplasmic side. Basolateral sorting signal stretches follow at residues A429 to R447 and R447 to V471. S430 bears the Phosphoserine mark. Phosphothreonine is present on T466. Phosphoserine is present on S470.

The protein belongs to the major facilitator superfamily. Monocarboxylate porter (TC 2.A.1.13) family. In terms of assembly, interacts with BSG; interaction mediates SLC16A3 targeting to the plasma membrane. Detected in testis, small intestine, parotid gland, lung and brain. Small amounts are detected in heart, kidney and spleen. Expressed in skeletal muscle.

Its subcellular location is the cell membrane. It localises to the basolateral cell membrane. It carries out the reaction (S)-lactate(in) + H(+)(in) = (S)-lactate(out) + H(+)(out). The catalysed reaction is pyruvate(out) + H(+)(out) = pyruvate(in) + H(+)(in). Its function is as follows. Proton-dependent transporter of monocarboxylates such as L-lactate and pyruvate. Plays a predominant role in the L-lactate efflux from highly glycolytic cells. This is Monocarboxylate transporter 4 (Slc16a3) from Rattus norvegicus (Rat).